Here is a 512-residue protein sequence, read N- to C-terminus: ATP synthase subunit alpha (512 aa).

169-176 (GDRQTGKT) serves as a coordination point for ATP.

The protein belongs to the ATPase alpha/beta chains family. In terms of assembly, F-type ATPases have 2 components, CF(1) - the catalytic core - and CF(0) - the membrane proton channel. CF(1) has five subunits: alpha(3), beta(3), gamma(1), delta(1), epsilon(1). CF(0) has three main subunits: a(1), b(2) and c(9-12). The alpha and beta chains form an alternating ring which encloses part of the gamma chain. CF(1) is attached to CF(0) by a central stalk formed by the gamma and epsilon chains, while a peripheral stalk is formed by the delta and b chains.

It localises to the cell inner membrane. The catalysed reaction is ATP + H2O + 4 H(+)(in) = ADP + phosphate + 5 H(+)(out). Functionally, produces ATP from ADP in the presence of a proton gradient across the membrane. The alpha chain is a regulatory subunit. In Ruegeria pomeroyi (strain ATCC 700808 / DSM 15171 / DSS-3) (Silicibacter pomeroyi), this protein is ATP synthase subunit alpha.